A 170-amino-acid chain; its full sequence is Peptide deformylase (170 aa).

Fe cation contacts are provided by C91 and H133. E134 is a catalytic residue. Residue H137 coordinates Fe cation.

Belongs to the polypeptide deformylase family. Requires Fe(2+) as cofactor.

It carries out the reaction N-terminal N-formyl-L-methionyl-[peptide] + H2O = N-terminal L-methionyl-[peptide] + formate. Functionally, removes the formyl group from the N-terminal Met of newly synthesized proteins. Requires at least a dipeptide for an efficient rate of reaction. N-terminal L-methionine is a prerequisite for activity but the enzyme has broad specificity at other positions. In Yersinia pseudotuberculosis serotype O:1b (strain IP 31758), this protein is Peptide deformylase.